Here is a 491-residue protein sequence, read N- to C-terminus: Bifunctional protein GlmU (491 aa).

Residues 1 to 238 (MTTQPAVPAA…EWEIRGVNDR (238 aa)) form a pyrophosphorylase region. UDP-N-acetyl-alpha-D-glucosamine-binding positions include 14 to 17 (LAAG), Lys-28, Gln-81, 86 to 87 (GT), 110 to 112 (YGD), Gly-149, Glu-163, Asn-178, and Asn-236. Asp-112 is a Mg(2+) binding site. Asn-236 is a binding site for Mg(2+). The interval 239–259 (AQLADLAAEANRRTLRRWMLA) is linker. The N-acetyltransferase stretch occupies residues 260–491 (GVTIADPATT…TASTDREIQP (232 aa)). 2 residues coordinate UDP-N-acetyl-alpha-D-glucosamine: Arg-341 and Lys-359. The Proton acceptor role is filled by His-371. 2 residues coordinate UDP-N-acetyl-alpha-D-glucosamine: Tyr-374 and Asn-385. Acetyl-CoA is bound by residues Ala-388, 394–395 (NY), Ser-413, and Ala-431. The segment at 460–491 (AKRPGTPAAEAAQRANDESTGTTASTDREIQP) is disordered.

It in the N-terminal section; belongs to the N-acetylglucosamine-1-phosphate uridyltransferase family. The protein in the C-terminal section; belongs to the transferase hexapeptide repeat family. In terms of assembly, homotrimer. The cofactor is Mg(2+).

The protein resides in the cytoplasm. The catalysed reaction is alpha-D-glucosamine 1-phosphate + acetyl-CoA = N-acetyl-alpha-D-glucosamine 1-phosphate + CoA + H(+). It carries out the reaction N-acetyl-alpha-D-glucosamine 1-phosphate + UTP + H(+) = UDP-N-acetyl-alpha-D-glucosamine + diphosphate. It functions in the pathway nucleotide-sugar biosynthesis; UDP-N-acetyl-alpha-D-glucosamine biosynthesis; N-acetyl-alpha-D-glucosamine 1-phosphate from alpha-D-glucosamine 6-phosphate (route II): step 2/2. It participates in nucleotide-sugar biosynthesis; UDP-N-acetyl-alpha-D-glucosamine biosynthesis; UDP-N-acetyl-alpha-D-glucosamine from N-acetyl-alpha-D-glucosamine 1-phosphate: step 1/1. The protein operates within bacterial outer membrane biogenesis; LPS lipid A biosynthesis. In terms of biological role, catalyzes the last two sequential reactions in the de novo biosynthetic pathway for UDP-N-acetylglucosamine (UDP-GlcNAc). The C-terminal domain catalyzes the transfer of acetyl group from acetyl coenzyme A to glucosamine-1-phosphate (GlcN-1-P) to produce N-acetylglucosamine-1-phosphate (GlcNAc-1-P), which is converted into UDP-GlcNAc by the transfer of uridine 5-monophosphate (from uridine 5-triphosphate), a reaction catalyzed by the N-terminal domain. This Kineococcus radiotolerans (strain ATCC BAA-149 / DSM 14245 / SRS30216) protein is Bifunctional protein GlmU.